The sequence spans 286 residues: Energy-coupling factor transporter ATP-binding protein EcfA2 (286 aa).

One can recognise an ABC transporter domain in the interval 3–245; sequence IKIENLTYTY…IDTLEKVGLA (243 aa). 40-47 is a binding site for ATP; it reads GHTGSGKS.

This sequence belongs to the ABC transporter superfamily. Energy-coupling factor EcfA family. As to quaternary structure, forms a stable energy-coupling factor (ECF) transporter complex composed of 2 membrane-embedded substrate-binding proteins (S component), 2 ATP-binding proteins (A component) and 2 transmembrane proteins (T component).

The protein localises to the cell membrane. In terms of biological role, ATP-binding (A) component of a common energy-coupling factor (ECF) ABC-transporter complex. Unlike classic ABC transporters this ECF transporter provides the energy necessary to transport a number of different substrates. The polypeptide is Energy-coupling factor transporter ATP-binding protein EcfA2 (Clostridium acetobutylicum (strain ATCC 824 / DSM 792 / JCM 1419 / IAM 19013 / LMG 5710 / NBRC 13948 / NRRL B-527 / VKM B-1787 / 2291 / W)).